Reading from the N-terminus, the 403-residue chain is Na(+)/H(+) antiporter NhaH (403 aa).

The Cytoplasmic portion of the chain corresponds to 1 to 6 (MHGFHD). Residues 7–27 (VFIQILLLLAISVSVIAIAKL) form a helical membrane-spanning segment. The Extracellular segment spans residues 28-30 (LKE). Residues 31 to 51 (PDSIALVLVGLVLGLTELPII) traverse the membrane as a helical segment. Residues 52–65 (EDAERYITQSEVFQ) lie on the Cytoplasmic side of the membrane. Residues 66-86 (ATIISLFLPILLGDATLKLPF) form a helical membrane-spanning segment. Over 87–98 (HHLFSQKKTVLG) the chain is Extracellular. A helical transmembrane segment spans residues 99-119 (LAFVGTFVSSICIGTAAYFLL). The Cytoplasmic portion of the chain corresponds to 120-124 (DLPLA). The helical transmembrane segment at 125–145 (VAFTFAALMSATDPISVLSIF) threads the bilayer. Over 146-167 (KSLGVPQKMSTVMEGESLFNDG) the chain is Extracellular. The helical transmembrane segment at 168–188 (IAVVLFKIASIYLLTYMEMGW) threads the bilayer. Topologically, residues 189–195 (AGLGSGV) are cytoplasmic. The chain crosses the membrane as a helical span at residues 196–216 (FLFLKFAIGGALVGLVLGYFF). The Extracellular segment spans residues 217–218 (SQ). Residues 219-239 (VIRVFDDYPLEVAFSALLFFG) form a helical membrane-spanning segment. Topologically, residues 240–241 (SY) are cytoplasmic. A helical transmembrane segment spans residues 242-262 (FIAEHFHTSGVIAVVVGGFVF). At 263–281 (GDYGAKIGMSKETKTNINT) the chain is on the extracellular side. Residues 282 to 302 (FWDSVTLIANALIFLMVGLEI) traverse the membrane as a helical segment. Residues 303-310 (RNIDLAGN) are Cytoplasmic-facing. A helical membrane pass occupies residues 311–331 (WGVIVGAILIVLVGRTIAVYL). Residues 332–372 (GTGWVQELSSKERLLINWGGLRGSLSVALALSLPMDFAGRD) lie on the Extracellular side of the membrane. The helical transmembrane segment at 373 to 393 (QVLLLTFSVVLFSLIVQGLTL) threads the bilayer. Topologically, residues 394–403 (KPLIKKLGMI) are cytoplasmic.

It belongs to the monovalent cation:proton antiporter 1 (CPA1) transporter (TC 2.A.36) family.

It is found in the cell membrane. Na(+)/H(+) antiporter that extrudes sodium in exchange for external protons. Can also transport lithium. This Halobacillus dabanensis protein is Na(+)/H(+) antiporter NhaH (nhaH).